The following is a 63-amino-acid chain: Sperm protamine P1 (63 aa).

A disordered region spans residues 1-63 (MARYRRHSRS…RYSRRGRRRY (63 aa)).

Belongs to the protamine P1 family. Testis.

Its subcellular location is the nucleus. The protein localises to the chromosome. Protamines substitute for histones in the chromatin of sperm during the haploid phase of spermatogenesis. They compact sperm DNA into a highly condensed, stable and inactive complex. The chain is Sperm protamine P1 (PRM1) from Sminthopsis bindi (Kakadu dunnart).